A 249-amino-acid chain; its full sequence is Probable transcriptional regulatory protein Rru_A1086 (249 aa).

This sequence belongs to the TACO1 family.

It is found in the cytoplasm. The polypeptide is Probable transcriptional regulatory protein Rru_A1086 (Rhodospirillum rubrum (strain ATCC 11170 / ATH 1.1.1 / DSM 467 / LMG 4362 / NCIMB 8255 / S1)).